Reading from the N-terminus, the 239-residue chain is 1-(5-phosphoribosyl)-5-[(5-phosphoribosylamino)methylideneamino] imidazole-4-carboxamide isomerase (239 aa).

The active-site Proton acceptor is Asp-8. Asp-129 (proton donor) is an active-site residue.

Belongs to the HisA/HisF family.

Its subcellular location is the cytoplasm. It catalyses the reaction 1-(5-phospho-beta-D-ribosyl)-5-[(5-phospho-beta-D-ribosylamino)methylideneamino]imidazole-4-carboxamide = 5-[(5-phospho-1-deoxy-D-ribulos-1-ylimino)methylamino]-1-(5-phospho-beta-D-ribosyl)imidazole-4-carboxamide. Its pathway is amino-acid biosynthesis; L-histidine biosynthesis; L-histidine from 5-phospho-alpha-D-ribose 1-diphosphate: step 4/9. This is 1-(5-phosphoribosyl)-5-[(5-phosphoribosylamino)methylideneamino] imidazole-4-carboxamide isomerase from Bacillus cereus (strain ATCC 10987 / NRS 248).